An 845-amino-acid chain; its full sequence is AdoMet-dependent rRNA methyltransferase SPB1 (845 aa).

Positions 58, 60, 78, 94, and 119 each coordinate S-adenosyl-L-methionine. K159 functions as the Proton acceptor in the catalytic mechanism. Disordered stretches follow at residues 223 to 247 (GGGN…SQRQ) and 279 to 298 (SLNK…DDDH). 2 coiled-coil regions span residues 366–402 (TEEQ…KEII) and 464–502 (DEEE…ERDA). The span at 496 to 512 (RKAERDANYRAKQARGD) shows a compositional bias: basic and acidic residues. Disordered regions lie at residues 496-546 (RKAE…DDDE), 587-660 (ENKT…HQQK), and 788-821 (KLNK…VKGK). Acidic residues-rich tracts occupy residues 513-528 (ADDE…NDDV), 536-545 (MESESDDDDD), 610-624 (NEND…ESDF), and 633-648 (DDDD…DDEV). The stretch at 739–796 (IKKVLEAQSRKKLRALKRLEKIKKKSDLINEDSGKSERDKADEISKLMKKLNKKQKQK) forms a coiled coil. Residues 788-797 (KLNKKQKQKP) show a composition bias toward basic residues.

This sequence belongs to the class I-like SAM-binding methyltransferase superfamily. RNA methyltransferase RlmE family. SPB1 subfamily. Component of the nucleolar and nucleoplasmic pre-60S ribosomal particle.

The protein localises to the nucleus. It is found in the nucleolus. It catalyses the reaction a ribonucleotide in rRNA + S-adenosyl-L-methionine = a 2'-O-methylribonucleotide in rRNA + S-adenosyl-L-homocysteine + H(+). In terms of biological role, required for proper assembly of pre-ribosomal particles during the biogenesis of the 60S ribosomal subunit. The protein is AdoMet-dependent rRNA methyltransferase SPB1 of Candida albicans (strain SC5314 / ATCC MYA-2876) (Yeast).